The following is a 220-amino-acid chain: Protein GrpE (220 aa).

It belongs to the GrpE family. As to quaternary structure, homodimer.

Its subcellular location is the cytoplasm. Its function is as follows. Participates actively in the response to hyperosmotic and heat shock by preventing the aggregation of stress-denatured proteins, in association with DnaK and GrpE. It is the nucleotide exchange factor for DnaK and may function as a thermosensor. Unfolded proteins bind initially to DnaJ; upon interaction with the DnaJ-bound protein, DnaK hydrolyzes its bound ATP, resulting in the formation of a stable complex. GrpE releases ADP from DnaK; ATP binding to DnaK triggers the release of the substrate protein, thus completing the reaction cycle. Several rounds of ATP-dependent interactions between DnaJ, DnaK and GrpE are required for fully efficient folding. The protein is Protein GrpE of Bartonella quintana (strain Toulouse) (Rochalimaea quintana).